A 936-amino-acid polypeptide reads, in one-letter code: Aftiphilin (936 aa).

The segment at Met1–Glu36 is disordered. Residues Met1–Glu523 form an interaction with AP1G1, AP1G2, GGA1 and GGA3 region. Acidic residues predominate over residues Gly19 to Gly29. The WXXF motif 1 motif lies at Phe28–Phe31. A Phosphoserine modification is found at Ser151. Disordered regions lie at residues Thr197–Ser216 and Lys374–Ser409. Over residues Lys374–Lys389 the composition is skewed to basic and acidic residues. The interaction with AP1G1 stretch occupies residues Glu386 to Glu610. Ser395 is modified (phosphoserine). The WXXF motif 2 signature appears at Phe432–Phe435. A WXXF motif 3 (partial) motif is present at residues Gly436 to Phe438. Positions Phe478–Phe481 match the WXXF motif 4 motif. Position 518 is a phosphoserine (Ser518). The disordered stretch occupies residues Gly589–Leu637. Positions Glu595–Glu610 are enriched in basic and acidic residues. Thr617 bears the Phosphothreonine mark. Positions Thr617–Ser628 are enriched in polar residues. Positions Tyr716–Trp718 match the CLTCL1/Clathrin-binding motif. Residues Leu825–Asp829 form a clathrin-binding region.

In terms of assembly, self-associates. Interacts with GGA1 (via GAE domain). Interacts with GGA3 (via GAE domain), AP1G1 (via GAE domain) and AP1G2 (via GAE domain). Component of the aftiphilin/p200/gamma-synergin complex, at least composed of AFTPH/aftiphilin, HEATR5B/p200a and SYNRG/gamma-synergin, which plays a role in the AP1G1/AP-1-mediated protein trafficking from early to recycling endosomes. Within the complex interacts with HEATR5B/p200a and SYNRG/gamma-synergin; the interactions are direct. Interacts with AP1G1/AP-1; the interaction is required to recruit AFTPH/aftiphilin to the perinuclear region of the cell. Interacts with CLTCL1/Clathrin.

Its subcellular location is the cytoplasm. The protein resides in the perinuclear region. It is found in the cytoplasmic vesicle. It localises to the clathrin-coated vesicle. In terms of biological role, component of clathrin-coated vesicles. Component of the aftiphilin/p200/gamma-synergin complex, which plays roles in AP1G1/AP-1-mediated protein trafficking including the trafficking of transferrin from early to recycling endosomes, and the membrane trafficking of furin and the lysosomal enzyme cathepsin D between the trans-Golgi network (TGN) and endosomes. This chain is Aftiphilin (AFTPH), found in Homo sapiens (Human).